A 34-amino-acid polypeptide reads, in one-letter code: Protamine-Z1/Z2 (34 aa).

The interval proline 1–arginine 34 is disordered.

As to expression, testis.

The protein resides in the nucleus. It localises to the chromosome. Its function is as follows. Protamines substitute for histones in the chromatin of sperm during the haploid phase of spermatogenesis. They compact sperm DNA into a highly condensed, stable and inactive complex. This is Protamine-Z1/Z2 from Sarda orientalis (Striped bonito).